Reading from the N-terminus, the 142-residue chain is Large ribosomal subunit protein uL13 (142 aa).

Belongs to the universal ribosomal protein uL13 family. In terms of assembly, part of the 50S ribosomal subunit.

Its function is as follows. This protein is one of the early assembly proteins of the 50S ribosomal subunit, although it is not seen to bind rRNA by itself. It is important during the early stages of 50S assembly. In Shewanella putrefaciens (strain CN-32 / ATCC BAA-453), this protein is Large ribosomal subunit protein uL13.